We begin with the raw amino-acid sequence, 209 residues long: Floral homeotic protein GLOBOSA (209 aa).

Residues 3-57 enclose the MADS-box domain; it reads RGKIEIKRIENSSNRQVTYSKRRNGILKKAKEISVLCDARVSVIIFASSGKMHEF. The region spanning 82-173 is the K-box domain; the sequence is HENLDNEINK…QLEIASMNRN (92 aa).

In terms of tissue distribution, expressed mainly in floral organs and, within the flower, expression is restricted to petals and stamens.

It localises to the nucleus. Transcription factor involved in the genetic control of flower development. Acts in conjunction with DEFICIENS (defA). This Nicotiana tabacum (Common tobacco) protein is Floral homeotic protein GLOBOSA (GLO).